We begin with the raw amino-acid sequence, 297 residues long: Protease HtpX homolog (297 aa).

The next 2 helical transmembrane spans lie at 5-25 (IFLF…VLSI) and 44-64 (IVAL…MSLL). His-155 contacts Zn(2+). Residue Glu-156 is part of the active site. Residue His-159 participates in Zn(2+) binding. A run of 2 helical transmembrane segments spans residues 170-190 (LLQG…AWAV) and 204-224 (FIAV…VVFA). Residue Glu-230 coordinates Zn(2+).

It belongs to the peptidase M48B family. Zn(2+) is required as a cofactor.

It localises to the cell membrane. The chain is Protease HtpX homolog from Bacillus licheniformis (strain ATCC 14580 / DSM 13 / JCM 2505 / CCUG 7422 / NBRC 12200 / NCIMB 9375 / NCTC 10341 / NRRL NRS-1264 / Gibson 46).